A 39-amino-acid polypeptide reads, in one-letter code: Fuctinin-3 (39 aa).

The interval 1–39 (KELNSNHDGADETSEKEQQEAIEHIDEVQNEIDRLNETA) is disordered.

This sequence to human SET/PHAPII protein. Oligomer.

It localises to the cytoplasm. Its function is as follows. Has a role in the physiological regulation of fucosylation processes. This is Fuctinin-3 from Rattus norvegicus (Rat).